A 477-amino-acid chain; its full sequence is Ribulose bisphosphate carboxylase large chain (477 aa).

Positions 1 to 2 are excised as a propeptide; the sequence is MS. The residue at position 3 (proline 3) is an N-acetylproline. Position 14 is an N6,N6,N6-trimethyllysine (lysine 14). Substrate-binding residues include asparagine 123 and threonine 173. The Proton acceptor role is filled by lysine 175. Lysine 177 contacts substrate. The Mg(2+) site is built by lysine 201, aspartate 203, and glutamate 204. Lysine 201 is modified (N6-carboxylysine). Histidine 294 (proton acceptor) is an active-site residue. The substrate site is built by arginine 295, histidine 327, and serine 379.

This sequence belongs to the RuBisCO large chain family. Type I subfamily. Heterohexadecamer of 8 large chains and 8 small chains; disulfide-linked. The disulfide link is formed within the large subunit homodimers. Mg(2+) is required as a cofactor. In terms of processing, the disulfide bond which can form in the large chain dimeric partners within the hexadecamer appears to be associated with oxidative stress and protein turnover.

It is found in the plastid. The protein resides in the chloroplast. It carries out the reaction 2 (2R)-3-phosphoglycerate + 2 H(+) = D-ribulose 1,5-bisphosphate + CO2 + H2O. It catalyses the reaction D-ribulose 1,5-bisphosphate + O2 = 2-phosphoglycolate + (2R)-3-phosphoglycerate + 2 H(+). Functionally, ruBisCO catalyzes two reactions: the carboxylation of D-ribulose 1,5-bisphosphate, the primary event in carbon dioxide fixation, as well as the oxidative fragmentation of the pentose substrate in the photorespiration process. Both reactions occur simultaneously and in competition at the same active site. The polypeptide is Ribulose bisphosphate carboxylase large chain (Nicotiana acuminata (Acuminate tobacco)).